A 90-amino-acid polypeptide reads, in one-letter code: Small ribosomal subunit protein bS20 (90 aa).

It belongs to the bacterial ribosomal protein bS20 family.

Functionally, binds directly to 16S ribosomal RNA. This is Small ribosomal subunit protein bS20 from Desulfitobacterium hafniense (strain DSM 10664 / DCB-2).